Reading from the N-terminus, the 211-residue chain is Thioredoxin domain-containing protein 9 homolog (211 aa).

The region spanning 68–178 is the Thioredoxin domain; it reads YSEIHSEKDF…LEERIARAQV (111 aa). Polar residues predominate over residues 184–203; it reads ESSSLKPKSTTQVRRNVRQS. Residues 184–211 form a disordered region; it reads ESSSLKPKSTTQVRRNVRQSARSDSDSE.

The sequence is that of Thioredoxin domain-containing protein 9 homolog from Arabidopsis thaliana (Mouse-ear cress).